The chain runs to 474 residues: Protein IFIT1 homolog B (474 aa).

TPR repeat units follow at residues 52–85, 95–128, 141–174, 182–216, 218–250, 251–284, 305–339, 340–373, 378–412, and 437–470; these read VGIH…IQKE, LVTW…CKKF, VDCE…NPEN, AITV…NPDD, YIRV…ISSQ, AYVF…TPTS, ATNW…KRTF, EMAY…KIFE, QEIH…EKMS, and VESV…AADL.

Belongs to the IFIT family.

Its function is as follows. IFIT1B is likely non-functional, lacking the critical antiviral role of IFIT1. Unlike IFIT1, which is essential in the innate immune response as part of an interferon-dependent multiprotein complex, IFIT1B does not prevent the translation of viral RNAs that lack host-specific 2'-O-methylation at their 5' cap. Consequently, it probably cannot inhibit their translation by competing with the host translation machinery. The chain is Protein IFIT1 homolog B from Homo sapiens (Human).